The sequence spans 115 residues: NADH-ubiquinone oxidoreductase chain 3 (115 aa).

A run of 3 helical transmembrane segments spans residues 4-24 (LMVLTVNMMLSTCLILIAFWL), 55-75 (FFLVAITFLLFDLEIALLLPL), and 84-104 (INIMTLTSFILVSVLALGLAY).

Belongs to the complex I subunit 3 family. Core subunit of respiratory chain NADH dehydrogenase (Complex I) which is composed of 45 different subunits. Interacts with TMEM186. Interacts with TMEM242.

It localises to the mitochondrion membrane. The enzyme catalyses a ubiquinone + NADH + 5 H(+)(in) = a ubiquinol + NAD(+) + 4 H(+)(out). Core subunit of the mitochondrial membrane respiratory chain NADH dehydrogenase (Complex I) that is believed to belong to the minimal assembly required for catalysis. Complex I functions in the transfer of electrons from NADH to the respiratory chain. The immediate electron acceptor for the enzyme is believed to be ubiquinone. The protein is NADH-ubiquinone oxidoreductase chain 3 of Onychomys leucogaster (Northern grasshopper mouse).